A 374-amino-acid polypeptide reads, in one-letter code: Calcium/calmodulin-dependent protein kinase type 1 (374 aa).

In terms of domain architecture, Protein kinase spans 20 to 276 (YDFRDVLGTG…CEQALQHPWI (257 aa)). Residues 26 to 34 (LGTGAFSEV) and K49 contribute to the ATP site. K59 participates in a covalent cross-link: Glycyl lysine isopeptide (Lys-Gly) (interchain with G-Cter in ubiquitin). D141 (proton acceptor) is an active-site residue. Position 177 is a phosphothreonine; by CaMKK1 and CaMKK2 (T177). Residues 263–264 (KR) carry the Involved in nuclear import motif. Residues 276–316 (IAGDTALDKNIHQSVSEQIKKNFAKSKWKQAFNATAVVRHM) form an autoinhibitory domain region. Positions 296-317 (KNFAKSKWKQAFNATAVVRHMR) are calmodulin-binding. The short motif at 315–321 (HMRKLQL) is the Nuclear export signal element.

The protein belongs to the protein kinase superfamily. CAMK Ser/Thr protein kinase family. CaMK subfamily. In terms of assembly, monomer. Interacts with XPO1. In terms of processing, phosphorylated by CaMKK1 and CaMKK2 on Thr-177. Post-translationally, polybiquitinated by the E3 ubiquitin-protein ligase complex SCF(FBXL12), leading to proteasomal degradation. As to expression, widely expressed.

It localises to the cytoplasm. It is found in the nucleus. The catalysed reaction is L-seryl-[protein] + ATP = O-phospho-L-seryl-[protein] + ADP + H(+). It carries out the reaction L-threonyl-[protein] + ATP = O-phospho-L-threonyl-[protein] + ADP + H(+). Activated by Ca(2+)/calmodulin. Binding of calmodulin results in conformational change that relieves intrasteric autoinhibition and allows phosphorylation of Thr-177 within the activation loop by CaMKK1 or CaMKK2. Phosphorylation of Thr-177 results in several fold increase in total activity. Unlike CaMK4, is unable to exhibit autonomous activity after Ca(2+)/calmodulin activation. Its function is as follows. Calcium/calmodulin-dependent protein kinase that operates in the calcium-triggered CaMKK-CaMK1 signaling cascade and, upon calcium influx, regulates transcription activators activity, cell cycle, hormone production, cell differentiation, actin filament organization and neurite outgrowth. Recognizes the substrate consensus sequence [MVLIF]-x-R-x(2)-[ST]-x(3)-[MVLIF]. Regulates axonal extension and growth cone motility in hippocampal and cerebellar nerve cells. Upon NMDA receptor-mediated Ca(2+) elevation, promotes dendritic growth in hippocampal neurons and is essential in synapses for full long-term potentiation (LTP) and ERK2-dependent translational activation. Downstream of NMDA receptors, promotes the formation of spines and synapses in hippocampal neurons by phosphorylating ARHGEF7/BETAPIX on 'Ser-516', which results in the enhancement of ARHGEF7 activity and activation of RAC1. Promotes neuronal differentiation and neurite outgrowth by activation and phosphorylation of MARK2 on 'Ser-91', 'Ser-92', 'Ser-93' and 'Ser-294'. Promotes nuclear export of HDAC5 and binding to 14-3-3 by phosphorylation of 'Ser-259' and 'Ser-498' in the regulation of muscle cell differentiation. Regulates NUMB-mediated endocytosis by phosphorylation of NUMB on 'Ser-275' and 'Ser-294'. Involved in the regulation of basal and estrogen-stimulated migration of medulloblastoma cells through ARHGEF7/BETAPIX phosphorylation. Is required for proper activation of cyclin-D1/CDK4 complex during G1 progression in diploid fibroblasts. Plays a role in K(+) and ANG2-mediated regulation of the aldosterone synthase (CYP11B2) to produce aldosterone in the adrenal cortex. Phosphorylates EIF4G3/eIF4GII. In vitro phosphorylates CREB1, ATF1, CFTR, MYL9 and SYN1/synapsin I. In Rattus norvegicus (Rat), this protein is Calcium/calmodulin-dependent protein kinase type 1 (Camk1).